The primary structure comprises 1107 residues: Unconventional myosin-Ie (1107 aa).

A Myosin motor domain is found at 19-692 (SGVDDMVLLS…SLFLLEEMRE (674 aa)). 112 to 119 (GESGAGKT) is a binding site for ATP. The segment at 581 to 591 (PHYIRCIKPNE) is actin-binding. The IQ domain maps to 695–724 (YDGYARVIQKTWRKFVARKKYVQMREEASD). One can recognise a TH1 domain in the interval 730 to 922 (KERRRNSINR…NKVLQVSIGP (193 aa)). The tract at residues 919–1052 (SIGPGLPKNS…KPQPKPKPQV (134 aa)) is disordered. Polar residues-rich tracts occupy residues 979-989 (NQRSNQKSLYT) and 998-1012 (RQQS…QTPE). Ser1001 carries the post-translational modification Phosphoserine. Pro residues predominate over residues 1034–1051 (RPPPAGGRPKPQPKPKPQ). Residues 1050 to 1107 (PQVPQCKALYAYDAQDTDELSFNANDIIDIIKEDPSGWWTGRLRGKQGLFPNNYVTKI) enclose the SH3 domain.

The protein belongs to the TRAFAC class myosin-kinesin ATPase superfamily. Myosin family. In terms of assembly, interacts with CALM and F-actin. Interacts (via SH3 domain) with SYNJ1, DNM1 and DNM2. Interacts with ARL14EP. Interacts with CARMIL1. As to expression, detected in kidney glomeruli (at protein level). Detected in utricle.

The protein localises to the cytoplasm. It is found in the cell junction. The protein resides in the cytoplasmic vesicle. It localises to the clathrin-coated vesicle. Its subcellular location is the cytoskeleton. In terms of biological role, myosins are actin-based motor molecules with ATPase activity. Unconventional myosins serve in intracellular movements. Their highly divergent tails bind to membranous compartments, which are then moved relative to actin filaments. Binds to membranes containing anionic phospholipids via its tail domain. Involved in clathrin-mediated endocytosis and intracellular movement of clathrin-coated vesicles. Required for normal morphology of the glomerular basement membrane, normal development of foot processes by kidney podocytes and normal kidney function. In dendritic cells, may control the movement of class II-containing cytoplasmic vesicles along the actin cytoskeleton by connecting them with the actin network via ARL14EP and ARL14. The sequence is that of Unconventional myosin-Ie (Myo1e) from Mus musculus (Mouse).